We begin with the raw amino-acid sequence, 493 residues long: MSESARTDVVLVGAGIMSATLGAMLRRLEPDWSITLIERLDAVAAESSGPWNNAGTGHSALCELNYTPQRPDGSIDISKAVRINEEFQVTRQFWAYAAENGILNDVRSFLNPLPHVSFVHGAERVHQLRRRRDALAGNPLFAGAEWIDDPDEFARRLPLMAAKRVFSEPIALNWAADGTDVDFGALSRQLIGYCVRNGAVALFGQEVRNLVRQPDGGWMLTVVNRRTGEKRKLKTKFVFVGAGGNALSLLQRSGIKEINGFAGFPIGGRFLRTANPALTAAHRAKVYGVPAPGAPPLGALHLDLRYVNGKSWLMFGPFAGWSPKFLKRGHLRDLPGSIKPNNILSMVGVGVTQVTLLNYLIGQLRLSEPDRVAVLRKFVPSAADSDWELIVAGQRVQVIRRDKRKGGVLEFGTTVVGEADGSIAGLLGGSPGASTAVPIMLEVLQRCFTHRYQSWLPALKEMVPSLGANLSEEPVLYDEVRSWSSRALQLDAS.

Belongs to the MQO family. It depends on FAD as a cofactor.

The enzyme catalyses (S)-malate + a quinone = a quinol + oxaloacetate. Its pathway is carbohydrate metabolism; tricarboxylic acid cycle; oxaloacetate from (S)-malate (quinone route): step 1/1. The protein is Probable malate:quinone oxidoreductase of Mycobacterium marinum (strain ATCC BAA-535 / M).